We begin with the raw amino-acid sequence, 778 residues long: Double zinc ribbon and ankyrin repeat-containing protein 1 (778 aa).

Residues Ser179 and Ser201 each carry the phosphoserine modification. 2 DZANK-type zinc fingers span residues 230 to 289 and 359 to 407; these read CAHC…CVVC and CSRC…GSCG. ANK repeat units follow at residues 631-662 and 666-695; these read ENKLLLEEVGSSGKGRLSVLEQLLDEGADPNC and QGRPAVIVAVVNKHYEAIPVLAQRGADIDQ. Phosphoserine is present on Ser768.

Interacts with NINL. Associates with DYNC1H1 and multiple dynein intermediate and light chains as well as actin-binding proteins.

It localises to the cytoplasm. The protein localises to the cytoskeleton. It is found in the microtubule organizing center. The protein resides in the centrosome. Its subcellular location is the cilium basal body. In terms of biological role, involved in vesicle transport in photoreceptor cells. The polypeptide is Double zinc ribbon and ankyrin repeat-containing protein 1 (Dzank1) (Mus musculus (Mouse)).